Reading from the N-terminus, the 74-residue chain is MKLLNILNYKALGLSLLYLALILVTFQISMGSYGEDEPQAGSILMVAGLIFSIIGVFLLMKFKPTYILWEKLKR.

The next 2 membrane-spanning stretches (helical) occupy residues 11–31 and 40–60; these read ALGL…ISMG and AGSI…FLLM.

Belongs to the PceB family.

The protein resides in the cell inner membrane. Its function is as follows. May act as a membrane anchor for the tetrachloroethene reductive dehalogenase PceA. This chain is Probable tetrachloroethene reductive dehalogenase membrane anchor protein, found in Sulfurospirillum multivorans (Dehalospirillum multivorans).